Consider the following 306-residue polypeptide: Cytochrome P450 monooxygenase aclO (306 aa).

C237 provides a ligand contact to heme.

It belongs to the cytochrome P450 family. The cofactor is heme.

Its pathway is mycotoxin biosynthesis. In terms of biological role, cytochrome P450 monooxygenase; part of the gene cluster that mediates the biosynthesis of aspirochlorine (or antibiotic A30641), an unusual halogenated spiro compound with distinctive antifungal properties due to selective inhibition of protein biosynthesis, and which is also active against bacteria, viruses, and murine tumor cells. The non-ribosomal peptide synthetase (NRPS) aclP is responsible the formation of the diketopiperazine (DKP) core from the condensation of 2 phenylalanine residues. One Phe residue is tailored into chlorotyrosine by hydroxylation and chlorination, whereas the second Phe undergoes an unprecedented C-C bond cleavage to be converted into glycine. After formation of the DKP, sulfur is incorporated into the DKP by conjugation with glutathione by aclG, followed by its stepwise degradation to the thiol by aclI, aclJ and aclK, and the dithiol oxidation by aclT. In addition, oxygenases (aclB, aclC, aclL and aclO) and O-methyltransferases (aclM and aclU) act as tailoring enzymes to produce the intermediate dechloroaspirochlorine. Ultimately, chlorination of dechloroaspirochlorine by the halogenase aclH is the last step in the aspirochlorine pathway. The sequence is that of Cytochrome P450 monooxygenase aclO from Aspergillus oryzae (strain ATCC 42149 / RIB 40) (Yellow koji mold).